The sequence spans 75 residues: Small ribosomal subunit protein bS18 (75 aa).

It belongs to the bacterial ribosomal protein bS18 family. As to quaternary structure, part of the 30S ribosomal subunit. Forms a tight heterodimer with protein bS6.

Its function is as follows. Binds as a heterodimer with protein bS6 to the central domain of the 16S rRNA, where it helps stabilize the platform of the 30S subunit. This Chromobacterium violaceum (strain ATCC 12472 / DSM 30191 / JCM 1249 / CCUG 213 / NBRC 12614 / NCIMB 9131 / NCTC 9757 / MK) protein is Small ribosomal subunit protein bS18.